The following is a 407-amino-acid chain: MSIDFRNIIKPYPSPIITGRGIDLDFPMLAGCLALLGLGLVMITSASSEVAAVQSGNTLYMMIRHLVYLVIGLGACIVTMMIPIATWQRLGWLMLIGAFGLLIMVILPGIGREVNGSMRWIGFGAFNVQPSEIAKVFVVIYLAGYLVRRQKEVRESWMGFFKPFIVLLPMAGLLLMEPDFGATVVMMGAAAAMLFLGGVGLFRFTLMVVLAVAAVTVLVQAQPYRMARLITFTDPWSDQFGSGYQLTQALIAFGRGEWLGVGLGNSVQKQFYLPEAHTDFVFSVLAEELGVVGSLCTVALFVFVCVRGMYIGMWAEKAKQYFAAYVAYGLSFLWIGQFLINIGVNVGLLPTKGLTLPFLSYGGSSLVICCACLGLLLRIEWESRTHLGSEEMEFSESDFAEEPTHGR.

Residues 1 to 25 lie on the Cytoplasmic side of the membrane; sequence MSIDFRNIIKPYPSPIITGRGIDLD. The chain crosses the membrane as a helical span at residues 26–46; it reads FPMLAGCLALLGLGLVMITSA. The Periplasmic segment spans residues 47–65; it reads SSEVAAVQSGNTLYMMIRH. The chain crosses the membrane as a helical span at residues 66 to 86; it reads LVYLVIGLGACIVTMMIPIAT. Over 87 to 89 the chain is Cytoplasmic; that stretch reads WQR. A helical transmembrane segment spans residues 90-110; that stretch reads LGWLMLIGAFGLLIMVILPGI. Topologically, residues 111-119 are periplasmic; it reads GREVNGSMR. Residues 120–140 form a helical membrane-spanning segment; sequence WIGFGAFNVQPSEIAKVFVVI. The Cytoplasmic segment spans residues 141-155; sequence YLAGYLVRRQKEVRE. Residues 156–176 traverse the membrane as a helical segment; the sequence is SWMGFFKPFIVLLPMAGLLLM. Residues 177 to 181 lie on the Periplasmic side of the membrane; it reads EPDFG. The helical transmembrane segment at 182–202 threads the bilayer; it reads ATVVMMGAAAAMLFLGGVGLF. Residue R203 is a topological domain, cytoplasmic. A helical membrane pass occupies residues 204–224; that stretch reads FTLMVVLAVAAVTVLVQAQPY. Residues 225–283 lie on the Periplasmic side of the membrane; that stretch reads RMARLITFTDPWSDQFGSGYQLTQALIAFGRGEWLGVGLGNSVQKQFYLPEAHTDFVFS. The helical transmembrane segment at 284–304 threads the bilayer; the sequence is VLAEELGVVGSLCTVALFVFV. Residues 305 to 321 lie on the Cytoplasmic side of the membrane; the sequence is CVRGMYIGMWAEKAKQY. A helical membrane pass occupies residues 322 to 342; sequence FAAYVAYGLSFLWIGQFLINI. Topologically, residues 343–355 are periplasmic; the sequence is GVNVGLLPTKGLT. Residues 356–376 form a helical membrane-spanning segment; sequence LPFLSYGGSSLVICCACLGLL. Topologically, residues 377-407 are cytoplasmic; sequence LRIEWESRTHLGSEEMEFSESDFAEEPTHGR.

This sequence belongs to the SEDS family. FtsW subfamily.

It localises to the cell inner membrane. The enzyme catalyses [GlcNAc-(1-&gt;4)-Mur2Ac(oyl-L-Ala-gamma-D-Glu-L-Lys-D-Ala-D-Ala)](n)-di-trans,octa-cis-undecaprenyl diphosphate + beta-D-GlcNAc-(1-&gt;4)-Mur2Ac(oyl-L-Ala-gamma-D-Glu-L-Lys-D-Ala-D-Ala)-di-trans,octa-cis-undecaprenyl diphosphate = [GlcNAc-(1-&gt;4)-Mur2Ac(oyl-L-Ala-gamma-D-Glu-L-Lys-D-Ala-D-Ala)](n+1)-di-trans,octa-cis-undecaprenyl diphosphate + di-trans,octa-cis-undecaprenyl diphosphate + H(+). It functions in the pathway cell wall biogenesis; peptidoglycan biosynthesis. Functionally, peptidoglycan polymerase that is essential for cell division. The sequence is that of Probable peptidoglycan glycosyltransferase FtsW from Pseudomonas fluorescens (strain SBW25).